The sequence spans 278 residues: Nudix hydrolase 2 (278 aa).

Residues 110-242 (SHRVGIGAFV…ELLRYMTDIC (133 aa)) enclose the Nudix hydrolase domain. Residues 147 to 168 (GVVNEGEDIHDGSVREVKEETG) carry the Nudix box motif. Residue glutamate 162 coordinates Mg(2+). Residue glutamate 165 is the Proton acceptor of the active site. Residue glutamate 166 coordinates Mg(2+).

This sequence belongs to the Nudix hydrolase family. The cofactor is Mg(2+). Mn(2+) is required as a cofactor. In terms of tissue distribution, expressed in roots, stems and leaves.

It carries out the reaction ADP-D-ribose + H2O = D-ribose 5-phosphate + AMP + 2 H(+). The catalysed reaction is NAD(+) + H2O = beta-nicotinamide D-ribonucleotide + AMP + 2 H(+). It catalyses the reaction NADH + H2O = reduced beta-nicotinamide D-ribonucleotide + AMP + 2 H(+). Probably mediates the hydrolysis of some nucleoside diphosphate derivatives. In vitro, it can use both NADH and ADP-ribose as substrates; however the relevance of such substrates in vivo is unclear. Confers tolerance to oxidative stress. The sequence is that of Nudix hydrolase 2 from Arabidopsis thaliana (Mouse-ear cress).